A 367-amino-acid polypeptide reads, in one-letter code: GDSL esterase/lipase At4g28780 (367 aa).

Positions 1–28 (MSTFLLTWIIMTVALSVTLFLMPQQTNA) are cleaved as a signal peptide. Catalysis depends on Ser38, which acts as the Nucleophile. Residue Asn119 is glycosylated (N-linked (GlcNAc...) asparagine). Catalysis depends on residues Asp328 and His331. An N-linked (GlcNAc...) asparagine glycan is attached at Asn356.

Belongs to the 'GDSL' lipolytic enzyme family.

The protein resides in the secreted. This chain is GDSL esterase/lipase At4g28780, found in Arabidopsis thaliana (Mouse-ear cress).